The primary structure comprises 511 residues: Coatomer subunit delta (511 aa).

A compositionally biased stretch (basic and acidic residues) spans 168–177; it reads QARRDAERQG. Residues 168-188 are disordered; sequence QARRDAERQGKKAPGFGGFGS. Ser223 is subject to Phosphoserine. Residues Lys233 and Lys241 each carry the N6-acetyllysine modification. The residue at position 244 (Ser244) is a Phosphoserine. In terms of domain architecture, MHD spans 271 to 511; that stretch reads MESVHMKIEE…TFLVDKYEIL (241 aa). N6-acetyllysine is present on residues Lys309 and Lys351. Ser493 carries the post-translational modification Phosphoserine.

Belongs to the adaptor complexes medium subunit family. Delta-COP subfamily. Oligomeric complex that consists of at least the alpha, beta, beta', gamma, delta, epsilon and zeta subunits.

Its subcellular location is the cytoplasm. The protein resides in the golgi apparatus membrane. It is found in the cytoplasmic vesicle. The protein localises to the COPI-coated vesicle membrane. In terms of biological role, the coatomer is a cytosolic protein complex that binds to dilysine motifs and reversibly associates with Golgi non-clathrin-coated vesicles, which further mediate biosynthetic protein transport from the ER, via the Golgi up to the trans Golgi network. Coatomer complex is required for budding from Golgi membranes, and is essential for the retrograde Golgi-to-ER transport of dilysine-tagged proteins. In mammals, the coatomer can only be recruited by membranes associated to ADP-ribosylation factors (ARFs), which are small GTP-binding proteins; the complex also influences the Golgi structural integrity, as well as the processing, activity, and endocytic recycling of LDL receptors. This Mus musculus (Mouse) protein is Coatomer subunit delta (Arcn1).